Consider the following 110-residue polypeptide: V-type proton ATPase subunit G 1 (110 aa).

Belongs to the V-ATPase G subunit family. As to quaternary structure, V-ATPase is a heteromultimeric enzyme composed of a peripheral catalytic V1 complex (components A to H) attached to an integral membrane V0 proton pore complex (components: a, c, c', c'' and d).

In terms of biological role, catalytic subunit of the peripheral V1 complex of vacuolar ATPase (V-ATPase). V-ATPase is responsible for acidifying a variety of intracellular compartments in eukaryotic cells. The chain is V-type proton ATPase subunit G 1 (VATG1) from Nicotiana tabacum (Common tobacco).